The chain runs to 272 residues: 3-methyl-2-oxobutanoate hydroxymethyltransferase (272 aa).

Residues Asp-42 and Asp-86 each coordinate Mg(2+). Residues 42–43 (DS), Asp-86, and Lys-116 contribute to the 3-methyl-2-oxobutanoate site. Glu-118 is a binding site for Mg(2+). The active-site Proton acceptor is the Glu-185.

It belongs to the PanB family. In terms of assembly, homodecamer; pentamer of dimers. Requires Mg(2+) as cofactor.

The protein resides in the cytoplasm. The catalysed reaction is 3-methyl-2-oxobutanoate + (6R)-5,10-methylene-5,6,7,8-tetrahydrofolate + H2O = 2-dehydropantoate + (6S)-5,6,7,8-tetrahydrofolate. It participates in cofactor biosynthesis; (R)-pantothenate biosynthesis; (R)-pantoate from 3-methyl-2-oxobutanoate: step 1/2. Its function is as follows. Catalyzes the reversible reaction in which hydroxymethyl group from 5,10-methylenetetrahydrofolate is transferred onto alpha-ketoisovalerate to form ketopantoate. The protein is 3-methyl-2-oxobutanoate hydroxymethyltransferase of Prochlorococcus marinus (strain MIT 9303).